Reading from the N-terminus, the 598-residue chain is Elongation factor 4 (598 aa).

Residues 2–184 (NRIRNFSIIA…TIVAKLPPPK (183 aa)) form the tr-type G domain. GTP is bound by residues 14–19 (DHGKST) and 131–134 (NKID).

This sequence belongs to the TRAFAC class translation factor GTPase superfamily. Classic translation factor GTPase family. LepA subfamily.

The protein localises to the cell inner membrane. The catalysed reaction is GTP + H2O = GDP + phosphate + H(+). In terms of biological role, required for accurate and efficient protein synthesis under certain stress conditions. May act as a fidelity factor of the translation reaction, by catalyzing a one-codon backward translocation of tRNAs on improperly translocated ribosomes. Back-translocation proceeds from a post-translocation (POST) complex to a pre-translocation (PRE) complex, thus giving elongation factor G a second chance to translocate the tRNAs correctly. Binds to ribosomes in a GTP-dependent manner. The chain is Elongation factor 4 from Desulfosudis oleivorans (strain DSM 6200 / JCM 39069 / Hxd3) (Desulfococcus oleovorans).